A 443-amino-acid chain; its full sequence is UDP-glucuronic acid decarboxylase 4 (443 aa).

Ala-2 is modified (N-acetylalanine). Residues 2-43 (ASELTNRRHEIEQPEAESYYPKPIKPWFVAIRPIRYMLREQR) lie on the Cytoplasmic side of the membrane. The helical; Signal-anchor for type II membrane protein transmembrane segment at 44–64 (LVFVLVGIAIATLGFTIFSKS) threads the bilayer. At 65–443 (SNHQPIPYDV…DSSTTSSSTE (379 aa)) the chain is on the lumenal side. 151-176 (DNFFTGRKENVMHHFNNPNFEMIRHD) provides a ligand contact to NAD(+). Arg-260 provides a ligand contact to substrate. Tyr-263 functions as the Proton acceptor in the catalytic mechanism. 263–267 (YDEGK) contacts NAD(+). Asn-292 serves as a coordination point for substrate. An NAD(+)-binding site is contributed by Arg-304. Residues 305 to 309 (VVSNF), 322 to 329 (YGDGKQTR), and 389 to 393 (DPHKR) contribute to the substrate site.

It belongs to the NAD(P)-dependent epimerase/dehydratase family. UDP-glucuronic acid decarboxylase subfamily. NAD(+) is required as a cofactor.

The protein resides in the golgi apparatus. It is found in the golgi stack membrane. It catalyses the reaction UDP-alpha-D-glucuronate + H(+) = UDP-alpha-D-xylose + CO2. The protein operates within nucleotide-sugar biosynthesis; UDP-alpha-D-xylose biosynthesis; UDP-alpha-D-xylose from UDP-alpha-D-glucuronate: step 1/1. In terms of biological role, catalyzes the NAD-dependent decarboxylation of UDP-glucuronic acid to UDP-xylose. Necessary for the biosynthesis of the core tetrasaccharide in glycosaminoglycan biosynthesis. This is UDP-glucuronic acid decarboxylase 4 (UXS4) from Arabidopsis thaliana (Mouse-ear cress).